The following is a 216-amino-acid chain: 3-isopropylmalate dehydratase small subunit (216 aa).

The protein belongs to the LeuD family. LeuD type 1 subfamily. As to quaternary structure, heterodimer of LeuC and LeuD.

The catalysed reaction is (2R,3S)-3-isopropylmalate = (2S)-2-isopropylmalate. It functions in the pathway amino-acid biosynthesis; L-leucine biosynthesis; L-leucine from 3-methyl-2-oxobutanoate: step 2/4. In terms of biological role, catalyzes the isomerization between 2-isopropylmalate and 3-isopropylmalate, via the formation of 2-isopropylmaleate. The sequence is that of 3-isopropylmalate dehydratase small subunit from Burkholderia mallei (strain NCTC 10247).